The primary structure comprises 475 residues: AP-1 complex subunit mu-1-I (475 aa).

Residues 175 to 473 form the MHD domain; that stretch reads KNEAFLDIVE…TQSGDDYTIR (299 aa). The disordered stretch occupies residues 240–262; the sequence is ASATTSDNNTETDKKPSITSSSA.

The protein belongs to the adaptor complexes medium subunit family. In terms of assembly, adaptor protein complex 1 (AP-1) is a heterotetramer composed of two large adaptins (gamma-type subunit APL4 and beta-type subunit APL2), a medium adaptin (mu-type subunit APM1) and a small adaptin (sigma-type subunit APS1). AP-1 interacts with clathrin.

It localises to the cytoplasmic vesicle. The protein resides in the clathrin-coated vesicle membrane. Its subcellular location is the membrane. The protein localises to the clathrin-coated pit. Component of the adaptor complexes which link clathrin to receptors in coated vesicles. Clathrin-associated protein complexes are believed to interact with the cytoplasmic tails of membrane proteins, leading to their selection and concentration. The AP-1 complex interacts directly with clathrin. AP57 is probably a subunit of the Golgi membrane adaptor. In Saccharomyces cerevisiae (strain ATCC 204508 / S288c) (Baker's yeast), this protein is AP-1 complex subunit mu-1-I (APM1).